Here is a 479-residue protein sequence, read N- to C-terminus: Glucagon receptor (479 aa).

An N-terminal signal peptide occupies residues 1–25 (MPPARLRHPHLLLLLLLACQPQAPA). The Extracellular segment spans residues 26–136 (AQAMDFLFQK…ELGVQREVAE (111 aa)). 3 disulfides stabilise this stretch: Cys-43–Cys-67, Cys-58–Cys-100, and Cys-81–Cys-121. N-linked (GlcNAc...) asparagine glycans are attached at residues Asn-46, Asn-59, Asn-74, Asn-78, and Asn-117. Residues 137 to 161 (MYSSFQAMYTAGYSLSLAALLLALA) traverse the membrane as a helical segment. At 162-173 (ILLGLSKLHCTR) the chain is on the cytoplasmic side. A helical membrane pass occupies residues 174-198 (NYIHANLLASFVLRASSVLALDALL). At 199–225 (KTRYSQRLGDDLSVSIWLSDEAVAGCR) the chain is on the extracellular side. Cys-224 and Cys-294 form a disulfide bridge. A helical membrane pass occupies residues 226–249 (VAAVFMQYGVVANYCWLLVEGVYL). The Cytoplasmic segment spans residues 250–263 (HSLLRQATIPERSC). A helical transmembrane segment spans residues 264–285 (FPLYLAIGWGAPMLFVIPWAVV). Over 286–303 (KCLFENIQCWTSNDNMGF) the chain is Extracellular. The chain crosses the membrane as a helical span at residues 304–326 (WWILRFPVFLAILINFSIFIRVL). Residues 327–350 (HVLVAKLRAHQMRCTDYKFRLARS) lie on the Cytoplasmic side of the membrane. A helical transmembrane segment spans residues 351-369 (TLTLIPLLGVHEVVFAFVT). Residues 370-381 (DEHAQGALRSAK) are Extracellular-facing. A helical transmembrane segment spans residues 382 to 402 (LFFDLFLSSFQGLLVAVLYCF). Over 403–479 (LNKEVQAELL…GLPGVAENPF (77 aa)) the chain is Cytoplasmic. Residues 426–479 (KAHRVGSHSARPPSGPPSEKLLLSTGGSSNGTSQEPSAETHLASGLPGVAENPF) form a disordered region. A compositionally biased stretch (low complexity) spans 446-458 (LLLSTGGSSNGTS). A Phosphoserine modification is found at Ser-458.

The protein belongs to the G-protein coupled receptor 2 family. Ligand-binding promotes phosphorylation of serine residues in the C-terminal cytoplasmic domain. Phosphorylation is important for receptor endocytosis after ligand-binding.

Its subcellular location is the cell membrane. G-protein coupled receptor for glucagon that plays a central role in the regulation of blood glucose levels and glucose homeostasis. Regulates the rate of hepatic glucose production by promoting glycogen hydrolysis and gluconeogenesis. Plays an important role in mediating the responses to fasting. Ligand binding causes a conformation change that triggers signaling via guanine nucleotide-binding proteins (G proteins) and modulates the activity of down-stream effectors, such as adenylate cyclase. Promotes activation of adenylate cyclase. Besides, plays a role in signaling via a phosphatidylinositol-calcium second messenger system. The protein is Glucagon receptor of Sus scrofa (Pig).